Here is a 144-residue protein sequence, read N- to C-terminus: uncharacterized protein (144 aa).

A signal peptide spans 1–16; that stretch reads MRKFLIVLLLPLLVLA.

This is an uncharacterized protein from Aquifex aeolicus (strain VF5).